The primary structure comprises 315 residues: 4-hydroxy-3-methylbut-2-enyl diphosphate reductase (315 aa).

Cysteine 12 lines the [4Fe-4S] cluster pocket. The (2E)-4-hydroxy-3-methylbut-2-enyl diphosphate site is built by histidine 41 and histidine 74. Dimethylallyl diphosphate contacts are provided by histidine 41 and histidine 74. Isopentenyl diphosphate contacts are provided by histidine 41 and histidine 74. Cysteine 96 serves as a coordination point for [4Fe-4S] cluster. Position 124 (histidine 124) interacts with (2E)-4-hydroxy-3-methylbut-2-enyl diphosphate. Histidine 124 contacts dimethylallyl diphosphate. Histidine 124 is an isopentenyl diphosphate binding site. The active-site Proton donor is glutamate 126. Threonine 168 is a binding site for (2E)-4-hydroxy-3-methylbut-2-enyl diphosphate. Cysteine 198 is a binding site for [4Fe-4S] cluster. Positions 226, 227, 228, and 270 each coordinate (2E)-4-hydroxy-3-methylbut-2-enyl diphosphate. Dimethylallyl diphosphate contacts are provided by serine 226, serine 227, asparagine 228, and serine 270. Positions 226, 227, 228, and 270 each coordinate isopentenyl diphosphate.

It belongs to the IspH family. Requires [4Fe-4S] cluster as cofactor.

It carries out the reaction isopentenyl diphosphate + 2 oxidized [2Fe-2S]-[ferredoxin] + H2O = (2E)-4-hydroxy-3-methylbut-2-enyl diphosphate + 2 reduced [2Fe-2S]-[ferredoxin] + 2 H(+). It catalyses the reaction dimethylallyl diphosphate + 2 oxidized [2Fe-2S]-[ferredoxin] + H2O = (2E)-4-hydroxy-3-methylbut-2-enyl diphosphate + 2 reduced [2Fe-2S]-[ferredoxin] + 2 H(+). It functions in the pathway isoprenoid biosynthesis; dimethylallyl diphosphate biosynthesis; dimethylallyl diphosphate from (2E)-4-hydroxy-3-methylbutenyl diphosphate: step 1/1. Its pathway is isoprenoid biosynthesis; isopentenyl diphosphate biosynthesis via DXP pathway; isopentenyl diphosphate from 1-deoxy-D-xylulose 5-phosphate: step 6/6. In terms of biological role, catalyzes the conversion of 1-hydroxy-2-methyl-2-(E)-butenyl 4-diphosphate (HMBPP) into a mixture of isopentenyl diphosphate (IPP) and dimethylallyl diphosphate (DMAPP). Acts in the terminal step of the DOXP/MEP pathway for isoprenoid precursor biosynthesis. In Pseudomonas entomophila (strain L48), this protein is 4-hydroxy-3-methylbut-2-enyl diphosphate reductase.